The sequence spans 355 residues: RNA binding protein fox-1 homolog 1 (355 aa).

Residues 1–123 (MNCEREQLRG…QPKRLHVSNI (123 aa)) form a disordered region. Residues 70–112 (QSHSEQSAADTSAHTVSGTATTDDSAPTDGQPQTQPSENTENK) show a composition bias toward polar residues. In terms of domain architecture, RRM spans 116–174 (KRLHVSNIPFRFRDPDLRQMFGGFGFVTFENSADADRAREKLHGTVVEGRKIEVNNATA). Arginine 298 is modified (asymmetric dimethylarginine).

Binds to the C-terminus of ATXN2.

It localises to the nucleus. Its subcellular location is the cytoplasm. RNA-binding protein that regulates alternative splicing events by binding to 5'-UGCAUGU-3' elements. Prevents binding of U2AF2 to the 3'-splice site. Regulates alternative splicing of tissue-specific exons and of differentially spliced exons during erythropoiesis. In Bos taurus (Bovine), this protein is RNA binding protein fox-1 homolog 1 (RBFOX1).